The following is a 349-amino-acid chain: Outer membrane protein assembly factor BamC (349 aa).

The signal sequence occupies residues 1–24 (MAILLQKSKVMKIAGMSLAMLLAA). The N-palmitoyl cysteine moiety is linked to residue Cys25. Cys25 is lipidated: S-diacylglycerol cysteine.

It belongs to the BamC family. In terms of assembly, part of the Bam complex, which is composed of the outer membrane protein BamA, and four lipoproteins BamB, BamC, BamD and BamE.

The protein resides in the cell outer membrane. Its function is as follows. Part of the outer membrane protein assembly complex, which is involved in assembly and insertion of beta-barrel proteins into the outer membrane. The protein is Outer membrane protein assembly factor BamC of Photorhabdus asymbiotica subsp. asymbiotica (strain ATCC 43949 / 3105-77) (Xenorhabdus luminescens (strain 2)).